A 1634-amino-acid chain; its full sequence is MTSAQCPALACVMSPLRFWGPWPLLMWQLLWLLVKEAQPLEWVKDPLQLTSNPLGPPEPWSSHSSHFPRESPHAPTLPADPWDFDHLGPSASSEMPAPPQESTENLVPFLDTWDSAGELPLEPEQFLASQQDLKDKLSPQERLPVSPKKLKKDPAQRWSLAEIIGIIHQLSTPQSQKQTLQNEYSSTDTPYPGSLPPELRVKSDEPPGPSEQVGPSQFHLEPETQNPETLEDIQSSSLQQEAPAQLPQLLEEEPSSMQQEAPALPPESSMESLTLPNHEVSVQPPGEDQAYYHLPNITVKPADVEVTITSEPTNETESSQAQQETPIQFPEEVEPSATQQEAPIEPPVPPMEHELSISEQQQPVQPSESSREVESSPTQQETPGQPPEHHEVTVSPPGHHQTHHLASPSVSVKPPDVQLTIAAEPSAEVGTSLVHQEATTRLSGSGNDVEPPAIQHGGPPLLPESSEEAGPLAVQQETSFQSPEPINNENPSPTQQEAAAEHPQTAEEGESSLTHQEAPAQTPEFPNVVVAQPPEHSHLTQATVQPLDLGFTITPESMTEVELSPTMKETPTQPPKKVVPQLRVYQGVTNPTPGQDQAQHPVSPSVTVQLLDLGLTITPEPTTEVGHSTPPKRTIVSPKHPEVTLPHPDQVQTQHSHLTRATVQPLDLGFTITPKSMTEVEPSTALMTTAPPPGHPEVTLPPSDKGQAQHSHLTQATVQPLDLELTITTKPTTEVKPSPTTEETSTQLPDLGLAIIPEPTTETGHSTALEKTTAPRPDRVQTLHRSLTEVTGPPTELEPAQDSLVQSESYTQNKALTAPEEHKASTSTNICELCTCGDEMLSCIDLNPEQRLRQVPVPEPNTHNGTFTILNFQGNYISYIDGNVWKAYSWTEKLILRENNLTELHKDSFEGLLSLQYLDLSCNKIQSIERHTFEPLPFLKFINLSCNVITELSFGTFQAWHGMQFLHKLILNHNPLTTVEDPYLFKLPALKYLDMGTTLVPLTTLKNILMMTVELEKLIVPSHMACCLCQFKNSIEAVCKTVKLHCNSACLTNTTHCPEEASVGNPEGAFMKVLQARKNYTSTELIIEPEEPSDSSGINLSGFGSEQLDTNDESDVTSTLSYILPYFSAVNLDVKSLLLPFIKLPTTGNSLAKIQTVGKNRQRLNRVLMGPRSIQKRHFKEVGRQSIRREQGAQASVENTAEEKRLGSPAPRELKQPHTQQGPEKLAGNAVYTKPSFTQEHKAAVSVLKPFSKGAPSTSSPAKALPQVRDRWKDLTHAISILESAKARVTNMKTSKPIVHSRKKYRFHKTRSRMTHRTPKVKKSPKVRKKSYLSRLMLSNRLPFSAAKSLINSPSQGAFSSLRDLSPQENPFLEVSAPSEHFIENNNTKDTTARNAFEENVFMENTNMPEGTISENTNYNHPPEADSAGTAFNLGPTVKQTETKWEYNNVGTDLSPEPKSFNYPLLSSPGDQFEIQLTQQLQSVIPNNNVRRLIAHVIRTLKMDCSGAHVQVTCAKLVSRTGHLMKLLSGQQEVKASKIEWDTDQWKTENYINESTEAQSEQKEKSLEFTKELPGYGYTKKLILALIVTGILTILIILLCLIEICCHRRSLQEDEEGFSRDSEAPTEEESEALP.

An N-terminal signal peptide occupies residues 1–35 (MTSAQCPALACVMSPLRFWGPWPLLMWQLLWLLVK). Residues 36–1581 (EAQPLEWVKD…ELPGYGYTKK (1546 aa)) are Extracellular-facing. Disordered regions lie at residues 53 to 104 (PLGP…ESTE), 129 to 154 (SQQD…KKDP), 172 to 531 (TPQS…VVVA), 619 to 642 (PEPT…KHPE), and 758 to 777 (EPTT…APRP). The LRR 1 repeat unit spans residues 137–160 (LSPQERLPVSPKKLKKDPAQRWSL). Composition is skewed to polar residues over residues 172 to 189 (TPQS…STDT) and 223 to 237 (ETQN…QSSS). LRR repeat units follow at residues 230 to 253 (LEDI…LEEE) and 267 to 290 (ESSM…EDQA). Positions 238–249 (LQQEAPAQLPQL) are enriched in low complexity. An N-linked (GlcNAc...) asparagine glycan is attached at Asn296. A compositionally biased stretch (polar residues) spans 307 to 326 (TITSEPTNETESSQAQQETP). A compositionally biased stretch (low complexity) spans 358–368 (SEQQQPVQPSE). Positions 433–446 (LVHQEATTRLSGSG) are enriched in polar residues. The span at 482–493 (SPEPINNENPSP) shows a compositional bias: low complexity. Positions 760-770 (TTETGHSTALE) are enriched in polar residues. LRR repeat units follow at residues 864–887 (NGTF…VWKA), 888–911 (YSWT…SFEG), 912–935 (LLSL…TFEP), 937–959 (PFLK…TFQA), 963–987 (MQFL…LFKL), and 1002–1027 (LTTL…MACC). Asn1079 is a glycosylation site (N-linked (GlcNAc...) asparagine). 2 LRR repeats span residues 1124-1146 (LPYF…KLPT) and 1151-1176 (LAKI…SIQK). 2 stretches are compositionally biased toward basic and acidic residues: residues 1181–1191 (EVGRQSIRREQ) and 1201–1216 (AEEK…ELKQ). Disordered stretches follow at residues 1181-1227 (EVGR…EKLA) and 1306-1329 (RFHK…KVRK). An LRR 12 repeat occupies 1359-1384 (FSSLRDLSPQENPFLEVSAPSEHFIE). Residues 1582–1602 (LILALIVTGILTILIILLCLI) traverse the membrane as a helical segment. The Cytoplasmic portion of the chain corresponds to 1603 to 1634 (EICCHRRSLQEDEEGFSRDSEAPTEEESEALP). Residues 1614 to 1634 (DEEGFSRDSEAPTEEESEALP) are disordered. A compositionally biased stretch (acidic residues) spans 1624–1634 (APTEEESEALP).

It belongs to the LRRC37A family.

The protein resides in the membrane. The sequence is that of Leucine-rich repeat-containing protein 37A3 (LRRC37A3) from Homo sapiens (Human).